The chain runs to 260 residues: Putative hydro-lyase Dshi_0610 (260 aa).

Belongs to the D-glutamate cyclase family.

This is Putative hydro-lyase Dshi_0610 from Dinoroseobacter shibae (strain DSM 16493 / NCIMB 14021 / DFL 12).